We begin with the raw amino-acid sequence, 464 residues long: Trehalose-6-phosphate synthase (464 aa).

Arginine 10 contributes to the D-glucose 6-phosphate binding site. Position 23 to 24 (23 to 24) interacts with UDP-alpha-D-glucose; that stretch reads GG. D-glucose 6-phosphate is bound by residues tyrosine 81 and aspartate 135. Residues arginine 268 and lysine 273 each coordinate UDP-alpha-D-glucose. D-glucose 6-phosphate is bound at residue arginine 306. 371–375 is a binding site for UDP-alpha-D-glucose; sequence LVAKE.

The protein belongs to the glycosyltransferase 20 family. Homotetramer.

It carries out the reaction D-glucose 6-phosphate + UDP-alpha-D-glucose = alpha,alpha-trehalose 6-phosphate + UDP + H(+). The protein operates within glycan biosynthesis; trehalose biosynthesis. In terms of biological role, probably involved in the osmoprotection via the biosynthesis of trehalose. Catalyzes the transfer of glucose from UDP-alpha-D-glucose (UDP-Glc) to D-glucose 6-phosphate (Glc-6-P) to form trehalose-6-phosphate. Acts with retention of the anomeric configuration of the UDP-sugar donor. This chain is Trehalose-6-phosphate synthase, found in Sinorhizobium fredii (strain NBRC 101917 / NGR234).